Here is a 644-residue protein sequence, read N- to C-terminus: Subversion of eukaryotic traffic protein A (644 aa).

The interval 1 to 400 (MYKIYSYLGW…FHTLLSQVSD (400 aa)) is glucosyltransferase. The tract at residues 401–644 (PVNPTAHELK…EYDNNHGLRI (244 aa)) is ptdIns(3)P-binding and localization domain.

Ubiquitinated and polyubiquitinated when ectopically produced in both yeast and mammalian cells; however it is unsure if this modification occurs during the L.pneumophila infection of host cells.

It is found in the secreted. Functionally, secreted effector that interferes with vesicular trafficking of host cells. Possesses glucohydrolase and mono-O-glucosyltransferase activity by using UDP-glucose as a sugar donor substrate. Is able to glucosylate histones H4 and H3.1 in vitro, but it is unlikely that histones are the natural substrates for SetA. May glycosylate a component of the host cell vesicle trafficking machinery during L.pneumophila infection. Binds with high specificity to phosphatidylinositol 3-phosphate (PtdIns(3)P), (with a dissociation constant value of 809 nM), which guides SetA to the cytosolic leaflet of the early phagosome of the host cell. This chain is Subversion of eukaryotic traffic protein A (setA), found in Legionella pneumophila subsp. pneumophila (strain Philadelphia 1 / ATCC 33152 / DSM 7513).